A 347-amino-acid chain; its full sequence is N-acetyl-gamma-glutamyl-phosphate reductase (347 aa).

Residue Cys-153 is part of the active site.

This sequence belongs to the NAGSA dehydrogenase family. Type 1 subfamily.

It is found in the cytoplasm. The enzyme catalyses N-acetyl-L-glutamate 5-semialdehyde + phosphate + NADP(+) = N-acetyl-L-glutamyl 5-phosphate + NADPH + H(+). The protein operates within amino-acid biosynthesis; L-arginine biosynthesis; N(2)-acetyl-L-ornithine from L-glutamate: step 3/4. Catalyzes the NADPH-dependent reduction of N-acetyl-5-glutamyl phosphate to yield N-acetyl-L-glutamate 5-semialdehyde. The sequence is that of N-acetyl-gamma-glutamyl-phosphate reductase from Mycobacterium leprae (strain Br4923).